Consider the following 179-residue polypeptide: GTP-dependent dephospho-CoA kinase (179 aa).

Asp49, Val50, Val51, Asp68, Lys70, and Glu126 together coordinate GTP.

This sequence belongs to the GTP-dependent DPCK family.

The catalysed reaction is 3'-dephospho-CoA + GTP = GDP + CoA + H(+). The protein operates within cofactor biosynthesis; coenzyme A biosynthesis. In terms of biological role, catalyzes the GTP-dependent phosphorylation of the 3'-hydroxyl group of dephosphocoenzyme A to form coenzyme A (CoA). In Pyrococcus abyssi (strain GE5 / Orsay), this protein is GTP-dependent dephospho-CoA kinase.